A 74-amino-acid chain; its full sequence is Acyl carrier protein (74 aa).

A Carrier domain is found at 1–73; sequence MAVFEKVQEI…DLVAYVEEKT (73 aa). S35 is modified (O-(pantetheine 4'-phosphoryl)serine).

It belongs to the acyl carrier protein (ACP) family. Post-translationally, 4'-phosphopantetheine is transferred from CoA to a specific serine of apo-ACP by AcpS. This modification is essential for activity because fatty acids are bound in thioester linkage to the sulfhydryl of the prosthetic group.

It is found in the cytoplasm. Its pathway is lipid metabolism; fatty acid biosynthesis. In terms of biological role, carrier of the growing fatty acid chain in fatty acid biosynthesis. This chain is Acyl carrier protein, found in Streptococcus thermophilus (strain CNRZ 1066).